A 473-amino-acid chain; its full sequence is TOX high mobility group box family member 2 (473 aa).

Disordered stretches follow at residues 1 to 42 (MSDG…SLLH), 139 to 211 (GLRS…VSAY), 277 to 302 (SKSPPDQGEAKNAQANPPAKMLPPKQ), and 340 to 473 (LLPG…PSAR). A compositionally biased stretch (polar residues) spans 8–20 (LLSTSQTYNSQGE). The segment at 25–63 (YEIPPITPPNLPEPSLLHLGDHEAGYHSLCHGLAPNGLL) is required for transcriptional activation. A compositionally biased stretch (low complexity) spans 153–164 (GSKSATPSPSSS). Over residues 171-188 (DAHFKISGEKRPSTDPGK) the composition is skewed to basic and acidic residues. The short motif at 172-201 (AHFKISGEKRPSTDPGKKAKNPKKKKKKDP) is the Nuclear localization signal element. The segment covering 189-199 (KAKNPKKKKKK) has biased composition (basic residues). A DNA-binding region (HMG box) is located at residues 204–272 (PQKPVSAYAL…EYLKALAAYR (69 aa)). Composition is skewed to low complexity over residues 373-382 (LLSPPLSMSP) and 415-440 (SDFPSGSGSRSPGPSNPSSSGDWDGS). A compositionally biased stretch (polar residues) spans 463 to 473 (SPKNLQEPSAR).

As to expression, highly expressed in ovary, where it is restricted to undifferentiated granulosa cells. Expressed in hypothalamus, pituitary gland, testis and uterus.

Its subcellular location is the nucleus. Putative transcriptional activator involved in the hypothalamo-pituitary-gonadal system. The polypeptide is TOX high mobility group box family member 2 (Tox2) (Rattus norvegicus (Rat)).